We begin with the raw amino-acid sequence, 432 residues long: 3-phosphoshikimate 1-carboxyvinyltransferase (432 aa).

Residues lysine 23, serine 24, and arginine 28 each contribute to the 3-phosphoshikimate site. Lysine 23 is a binding site for phosphoenolpyruvate. Positions 95 and 123 each coordinate phosphoenolpyruvate. Residues serine 167, glutamine 169, aspartate 317, and lysine 344 each coordinate 3-phosphoshikimate. A phosphoenolpyruvate-binding site is contributed by glutamine 169. Catalysis depends on aspartate 317, which acts as the Proton acceptor. Residues arginine 348 and arginine 390 each coordinate phosphoenolpyruvate.

The protein belongs to the EPSP synthase family. In terms of assembly, monomer.

It localises to the cytoplasm. It carries out the reaction 3-phosphoshikimate + phosphoenolpyruvate = 5-O-(1-carboxyvinyl)-3-phosphoshikimate + phosphate. The protein operates within metabolic intermediate biosynthesis; chorismate biosynthesis; chorismate from D-erythrose 4-phosphate and phosphoenolpyruvate: step 6/7. Its function is as follows. Catalyzes the transfer of the enolpyruvyl moiety of phosphoenolpyruvate (PEP) to the 5-hydroxyl of shikimate-3-phosphate (S3P) to produce enolpyruvyl shikimate-3-phosphate and inorganic phosphate. The chain is 3-phosphoshikimate 1-carboxyvinyltransferase from Staphylococcus aureus (strain bovine RF122 / ET3-1).